The following is a 517-amino-acid chain: Pentatricopeptide repeat-containing protein At1g13040, mitochondrial (517 aa).

The N-terminal 57 residues, M1–E57, are a transit peptide targeting the mitochondrion. 14 PPR repeats span residues V8–V42, F43–L77, I78–P112, D113–P147, D148–P182, D183–L218, S219–P253, D254–L288, D289–R320, D324–M358, N359–P393, D394–P428, D429–P463, and D464–L498.

Belongs to the PPR family. P subfamily.

It is found in the mitochondrion. This Arabidopsis thaliana (Mouse-ear cress) protein is Pentatricopeptide repeat-containing protein At1g13040, mitochondrial.